Consider the following 319-residue polypeptide: F-box only protein 8 (319 aa).

One can recognise an F-box domain in the interval 68-111 (FINLEMLPPELSFTILSYLNATDLCLASCVWQDLANDELLWQGL). In terms of domain architecture, SEC7 spans 146-276 (FNANPDEGVN…LILLSIDLTS (131 aa)).

Functionally, may promote guanine-nucleotide exchange on an ARF. Promotes the activation of ARF through replacement of GDP with GTP (Potential). The protein is F-box only protein 8 (FBXO8) of Homo sapiens (Human).